Here is a 354-residue protein sequence, read N- to C-terminus: MNTFGNIFKLTSFGESHGTAIGGVIDGCPAGIVLDMEFVQGELDKRRPGQSELTTSRNESDKVEFLSGIYEGKTIGTPIGFIVWNNNQHSSDYDSLKNVFRPSHADYTYFQKYRHYDHRGGGRSSARETIARVVAGAIAKLILQKKGIKITAYVSQVGDICLSKSYIQVDFSNIEKTAVRCPDLEIAKQMIALIQSVRLRGDTVGGVITCICHGVPVGLGNPVFGKLSAALSNAMMSINATKGFDYGMGFNGIHRKGSEANDLYYRNKDGKIVTKSNYSGGIQGGISSGEDIYFRVAFKPVATLLQGQLTVDKDGNEIQLEVKGRHDPCVLPRAVPIVESMAAMTILDYYLYNY.

Arg-46 is an NADP(+) binding site. FMN is bound by residues 123–125 (RSS), 239–240 (NA), Gly-284, 299–303 (KPVAT), and Arg-325.

The protein belongs to the chorismate synthase family. Homotetramer. FMNH2 is required as a cofactor.

The enzyme catalyses 5-O-(1-carboxyvinyl)-3-phosphoshikimate = chorismate + phosphate. It participates in metabolic intermediate biosynthesis; chorismate biosynthesis; chorismate from D-erythrose 4-phosphate and phosphoenolpyruvate: step 7/7. In terms of biological role, catalyzes the anti-1,4-elimination of the C-3 phosphate and the C-6 proR hydrogen from 5-enolpyruvylshikimate-3-phosphate (EPSP) to yield chorismate, which is the branch point compound that serves as the starting substrate for the three terminal pathways of aromatic amino acid biosynthesis. This reaction introduces a second double bond into the aromatic ring system. The chain is Chorismate synthase from Azobacteroides pseudotrichonymphae genomovar. CFP2.